A 439-amino-acid polypeptide reads, in one-letter code: MDHLAHHYHAHIAELNRRVAEIVSREALSGLVIHSGQPHRMFLDDINYPFKANPHFKAWLPVLDNPNCWLVVNGRDKPQLIFYHPVDFWHKVSDVPEMFWTEHFEIKLLTKADKVAELLPSDITNWAYLGEHLDVAEVLGFTSRNPDSVMSYLHFHRTTKTEYELECMRRANQIAVQGHLAAKNAFYNGASEFEIQQQYLSAVGQGENEVPYGNIIALNQNAAILHYTALEHQNPARRLSFLIDAGASYFGYASDITRTYAFEKNRFDELITAMNKAQLELIDMMRPGVRYPDLHLATHGKVAQMLLDFELATGDAQGLVDQGITSAFFPHGLGHMLGLQVHDVGGFAFDERGTHIPAPEAHPFLRCTRILAPNQVLTMEPGLYIIDTLLNELKQDSRDQQINWRTVDELRPFGGIRIEDNVIVHQDRNENMTRELGLA.

Residues aspartate 244, aspartate 255, histidine 335, glutamate 380, and glutamate 419 each contribute to the Mn(2+) site.

The protein belongs to the peptidase M24B family. Bacterial-type prolidase subfamily. It depends on Mn(2+) as a cofactor.

The catalysed reaction is Xaa-L-Pro dipeptide + H2O = an L-alpha-amino acid + L-proline. Its function is as follows. Splits dipeptides with a prolyl residue in the C-terminal position. In Shewanella sp. (strain MR-4), this protein is Xaa-Pro dipeptidase.